A 301-amino-acid chain; its full sequence is Vomeronasal type-1 receptor 4 (301 aa).

At methionine 1–tyrosine 5 the chain is on the extracellular side. Residues valine 6–leucine 26 form a helical membrane-spanning segment. The Cytoplasmic portion of the chain corresponds to leucine 27–histidine 48. Residues leucine 49–phenylalanine 69 traverse the membrane as a helical segment. Residues glycine 70 to arginine 88 lie on the Extracellular side of the membrane. A helical membrane pass occupies residues valine 89 to valine 109. At serine 110 to histidine 126 the chain is on the cytoplasmic side. Residues valine 127–methionine 147 traverse the membrane as a helical segment. Over tyrosine 148–serine 185 the chain is Extracellular. N-linked (GlcNAc...) asparagine glycans are attached at residues asparagine 154 and asparagine 157. Residues phenylalanine 186–leucine 206 traverse the membrane as a helical segment. Topologically, residues histidine 207–serine 234 are cytoplasmic. A helical membrane pass occupies residues isoleucine 235–cysteine 255. At methionine 256 to serine 264 the chain is on the extracellular side. A helical membrane pass occupies residues leucine 265–leucine 285. Topologically, residues methionine 286–arginine 301 are cytoplasmic.

It belongs to the G-protein coupled receptor 1 family.

It localises to the cell membrane. Functionally, putative pheromone receptor. The polypeptide is Vomeronasal type-1 receptor 4 (VN1R4) (Homo sapiens (Human)).